The primary structure comprises 125 residues: Basic leucine zipper transcriptional factor ATF-like (125 aa).

Over residues 1–14 the composition is skewed to low complexity; that stretch reads MPHSSDSSDSSFSR. The segment at 1–58 is disordered; the sequence is MPHSSDSSDSSFSRSPPPGKQDSSDDVRKVQRREKNRIAAQKSRQRQTQKADTLHLES. The region spanning 26–89 is the bZIP domain; that stretch reads DVRKVQRREK…KYFTSVLSSH (64 aa). Residues 28–50 form a basic motif region; it reads RKVQRREKNRIAAQKSRQRQTQK. S43 is modified (phosphoserine). T48 bears the Phosphothreonine mark. The tract at residues 54–75 is leucine-zipper; that stretch reads LHLESEDLEKQNAALRKEIKQL.

It belongs to the bZIP family. As to quaternary structure, heterodimer; mainly heterodimerizes with JUNB. The BATF-JUNB heterodimer interacts with IRF4 and IRF8. Interacts (via bZIP domain) with IRF4 and IRF8; the interaction is direct. Also forms heterodimers with JUN and JUND. Interacts with IFI35. Post-translationally, phosphorylated on serine and threonine residues and at least one tyrosine residue. Phosphorylation at Ser-43 inhibit DNA binding activity and transforms it as a negative regulator of AP-1 mediated transcription.

It is found in the nucleus. The protein localises to the cytoplasm. Functionally, AP-1 family transcription factor that controls the differentiation of lineage-specific cells in the immune system: specifically mediates the differentiation of T-helper 17 cells (Th17), follicular T-helper cells (TfH), CD8(+) dendritic cells and class-switch recombination (CSR) in B-cells. Acts via the formation of a heterodimer with JUNB that recognizes and binds DNA sequence 5'-TGA[CG]TCA-3'. The BATF-JUNB heterodimer also forms a complex with IRF4 (or IRF8) in immune cells, leading to recognition of AICE sequence (5'-TGAnTCA/GAAA-3'), an immune-specific regulatory element, followed by cooperative binding of BATF and IRF4 (or IRF8) and activation of genes. Controls differentiation of T-helper cells producing interleukin-17 (Th17 cells) by binding to Th17-associated gene promoters: regulates expression of the transcription factor RORC itself and RORC target genes such as IL17 (IL17A or IL17B). Also involved in differentiation of follicular T-helper cells (TfH) by directing expression of BCL6 and MAF. In B-cells, involved in class-switch recombination (CSR) by controlling the expression of both AICDA and of germline transcripts of the intervening heavy-chain region and constant heavy-chain region (I(H)-C(H)). Following infection, can participate in CD8(+) dendritic cell differentiation via interaction with IRF4 and IRF8 to mediate cooperative gene activation. Regulates effector CD8(+) T-cell differentiation by regulating expression of SIRT1. Following DNA damage, part of a differentiation checkpoint that limits self-renewal of hematopoietic stem cells (HSCs): up-regulated by STAT3, leading to differentiation of HSCs, thereby restricting self-renewal of HSCs. The sequence is that of Basic leucine zipper transcriptional factor ATF-like (BATF) from Bos taurus (Bovine).